A 229-amino-acid chain; its full sequence is Ras-like protein rasV (229 aa).

40-47 lines the GTP pocket; it reads GDGGVGKT. An Effector region motif is present at residues 62–70; it reads YDPTIEDSY. Residues 87 to 91 and 146 to 149 each bind GTP; these read DTAGQ and NKSD. C226 carries the cysteine methyl ester modification. Residue C226 is the site of S-geranylgeranyl cysteine attachment. Residues 227–229 constitute a propeptide, removed in mature form; sequence KVM.

This sequence belongs to the small GTPase superfamily. Ras family.

It is found in the cell membrane. It carries out the reaction GTP + H2O = GDP + phosphate + H(+). Its function is as follows. Ras proteins bind GDP/GTP and possess intrinsic GTPase activity. This is Ras-like protein rasV (rasV) from Dictyostelium discoideum (Social amoeba).